A 226-amino-acid chain; its full sequence is Late expression factor 7 (226 aa).

The region spanning 9 to 58 (RAKRIRLPLEIIDTILQYLDPILHAKVVGLTTRVKCRLLRDNNVEDYLKL) is the F-box domain.

As to quaternary structure, interacts with host S-phase kinase-associated protein 1/SKP1.

It localises to the host nucleus. The protein operates within protein degradation; proteasomal ubiquitin-dependent pathway. F-box protein that manipulates the host DNA damage response (DRR) in order to promote viral multiplication. Acts as a substrate recognition component of SKP1/Cullin/F-box (SCF) complexes for targeted protein polyubiquitination. This chain is Late expression factor 7 (LEF-7), found in Lepidoptera (butterflies and moths).